The primary structure comprises 606 residues: MSNLSRRNFITGGAIAALGGTLAIAGCAPKGESSSTVAGAAGEGAQAWTGTANGKGGELTVEVITEGDSIARINPLKSRESYGVGTAGIDVLSDLIVKNQTLNVDMVTGATVSSMAFLTAVSDAVDASGMKSSEWKKREKAVPQAPEGLTTDVDVVVVGAGGAGYAAALTAAEAGKNVVLLEKLGIVGGDTILSGGAMAVPNNWFQKRDGIEDSVEKMAEDMIVGGDHVGDPDLVNVICEGAYGAMEWLIFNGGVAWQPYERFFGGHSVIRSLIPEGNEGSGIICKLDKRAEGLKNLKVCRNTKADELVQDASGAVVGLKATNTATGETYDFKAKAVILAAGGFGSNVEMRMKYNPEMDEKILSTDSVGATGDCHVMAEKIGANLIDMQYIQTYPTCDTQTGALLYVGNMRLENRAICINKEGDRFVEEMERRDVISNAIKEQTDGIGYMIFNQDGLDHTDIATVNAAEMDGLFGRGQLAKGETIAEACEPFGIDAAELQKTVEKWNGYCKDGADPDFNYRAALNPIEGGPYYILAYKPSVHYTMGGLHINTDAQVLDSDAAPIPGLFAAGEQAGHKMGTNRLGSCSITDVFVFGRVAGANAAALA.

Positions 1–40 (MSNLSRRNFITGGAIAALGGTLAIAGCAPKGESSSTVAGA) form a signal peptide, tat-type signal. Threonine 111 carries the post-translational modification FMN phosphoryl threonine. FAD contacts are provided by alanine 163, glutamate 182, threonine 191, glycine 195, glycine 196, alanine 197, alanine 305, and aspartate 373. Catalysis depends on arginine 433, which acts as the Proton donor. The FAD site is built by glutamate 572 and isoleucine 588.

The protein belongs to the FAD-dependent oxidoreductase 2 family. FRD/SDH subfamily. It depends on FAD as a cofactor. The cofactor is FMN. Post-translationally, predicted to be exported by the Tat system. The position of the signal peptide cleavage has not been experimentally proven.

It carries out the reaction dihydrourocanate + A = urocanate + AH2. Catalyzes the two-electron reduction of urocanate to dihydrourocanate (also named imidazole propionate or deamino-histidine). Dihydrourocanate is present at higher concentrations in subjects with type 2 diabetes, and directly impairs glucose tolerance and insulin signaling at the level of insulin receptor substrate (IRS) through activation of p38 gamma (MAPK12)-p62-mTORC1. Therefore, the UrdA enzyme from the gut bacteria E.lenta strain DSM 2243 may contribute to the pathogenesis of type 2 diabetes by producing the microbial metabolite dihydrourocanate. This chain is Urocanate reductase, found in Eggerthella lenta (strain ATCC 25559 / DSM 2243 / CCUG 17323 / JCM 9979 / KCTC 3265 / NCTC 11813 / VPI 0255 / 1899 B) (Eubacterium lentum).